The chain runs to 607 residues: Dolichyl-diphosphooligosaccharide--protein glycosyltransferase subunit 1 (607 aa).

The first 24 residues, 1–24 (MEVPTARLLLLLLLGAWAPAPESA), serve as a signal peptide directing secretion. Residues 25–434 (SPEAPLLVNE…VVHYTFNKVL (410 aa)) lie on the Lumenal side of the membrane. K187 is modified (N6-acetyllysine). A glycan (N-linked (GlcNAc...) asparagine) is linked at N299. A helical membrane pass occupies residues 435–455 (MLQEPLLVVAAFYILFFTVII). The Cytoplasmic portion of the chain corresponds to 456–607 (YVRLDFSITK…TKIDHILDAL (152 aa)). K538 is modified (N6-acetyllysine; alternate). Residue K538 forms a Glycyl lysine isopeptide (Lys-Gly) (interchain with G-Cter in SUMO2); alternate linkage.

Belongs to the OST1 family. As to quaternary structure, component of the oligosaccharyltransferase (OST) complex. OST exists in two different complex forms which contain common core subunits RPN1, RPN2, OST48, OST4, DAD1 and TMEM258, either STT3A or STT3B as catalytic subunits, and form-specific accessory subunits. STT3A complex assembly occurs through the formation of 3 subcomplexes. Subcomplex 1 contains RPN1 and TMEM258, subcomplex 2 contains the STT3A-specific subunits STT3A, DC2/OSTC, and KCP2 as well as the core subunit OST4, and subcomplex 3 contains RPN2, DAD1, and OST48. The STT3A complex can form stable complexes with the Sec61 complex or with both the Sec61 and TRAP complexes. Interacts with TMEM35A/NACHO. Ubiquitinated by the ECS(ASB11) complex. Post-translationally, ufmylated by UFL1 in response to endoplasmic reticulum stress, promoting reticulophagy of endoplasmic reticulum sheets.

The protein localises to the endoplasmic reticulum membrane. The protein operates within protein modification; protein glycosylation. Subunit of the oligosaccharyl transferase (OST) complex that catalyzes the initial transfer of a defined glycan (Glc(3)Man(9)GlcNAc(2) in eukaryotes) from the lipid carrier dolichol-pyrophosphate to an asparagine residue within an Asn-X-Ser/Thr consensus motif in nascent polypeptide chains, the first step in protein N-glycosylation. N-glycosylation occurs cotranslationally and the complex associates with the Sec61 complex at the channel-forming translocon complex that mediates protein translocation across the endoplasmic reticulum (ER). All subunits are required for a maximal enzyme activity. The sequence is that of Dolichyl-diphosphooligosaccharide--protein glycosyltransferase subunit 1 from Canis lupus familiaris (Dog).